We begin with the raw amino-acid sequence, 75 residues long: Pi-hexatoxin-Hi1b (75 aa).

Disulfide bonds link cysteine 3–cysteine 18, cysteine 10–cysteine 23, cysteine 17–cysteine 33, cysteine 40–cysteine 55, cysteine 47–cysteine 60, and cysteine 54–cysteine 71. Domain repeat units follow at residues 3–33 (CIRKWLSCVDRKNDCCEGLECYKRRHSFEVC) and 40–71 (CLVKWKQCDGRERDCCPGLECWKRSGNKSSVC). The 2 X approximate repeats with cysteine pattern C-C-CC-C-C stretch occupies residues 3-71 (CIRKWLSCVD…KRSGNKSSVC (69 aa)).

It belongs to the psalmotoxin-1 family. Double-knot toxin subfamily. As to expression, expressed by the venom gland.

The protein localises to the secreted. Functionally, this toxin potently and selectively inhibits ASIC1a, an isoform of the gene ASIC1. It incompletely inhibits ASIC1a activation in a pH-independent and slowly reversible manner. This toxin acts by binding to and stabilizing the closed state of the channel, thereby impeding the transition into a conducting state. This toxin may bind to the acidic pocket of ASIC1a, since mutation of a key residue of this pocket (Arg-350) abolishes the ability of the toxin to inhibit ASIC1a. In vivo, this toxin protects the brain from neuronal injury when administered up to 8 hours after stroke onset. In Hadronyche infensa (Fraser island funnel-web spider), this protein is Pi-hexatoxin-Hi1b.